The chain runs to 111 residues: Mitochondrial import inner membrane translocase subunit TIM14 (111 aa).

At 1-3 (MTG) the chain is on the mitochondrial intermembrane side. A helical transmembrane segment spans residues 4-24 (GLIAAGLGLAAVGFGARYVLR). Residues 25–111 (NQALIKKGME…AKDLMESTKS (87 aa)) are Mitochondrial matrix-facing. In terms of domain architecture, J spans 58 to 111 (EAAKILGITPSAKPAKIKDAHKKVMIVNHPDRGGSPYLAAKINEAKDLMESTKS).

It belongs to the TIM14 family. Probable component of the PAM complex at least composed of a mitochondrial HSP70 protein, GrpE, tim-44, tim-16 and tim-14.

It is found in the mitochondrion inner membrane. Probable component of the PAM complex, a complex required for the translocation of transit peptide-containing proteins from the inner membrane into the mitochondrial matrix in an ATP-dependent manner. May act as a co-chaperone that stimulate the ATP-dependent activity. This Caenorhabditis briggsae protein is Mitochondrial import inner membrane translocase subunit TIM14 (dnj-21).